A 500-amino-acid polypeptide reads, in one-letter code: Cytochrome P450 11B2, mitochondrial (500 aa).

Residues 1-24 constitute a mitochondrion transit peptide; it reads MALRVTADVWLARPWQCLHRTRAL. A 21-hydroxyprogesterone-binding site is contributed by F381. Residue C447 coordinates heme.

Belongs to the cytochrome P450 family. Heme is required as a cofactor.

It localises to the mitochondrion inner membrane. It carries out the reaction a steroid + 2 reduced [adrenodoxin] + O2 + 2 H(+) = an 11beta-hydroxysteroid + 2 oxidized [adrenodoxin] + H2O. It catalyses the reaction 21-hydroxyprogesterone + 2 reduced [adrenodoxin] + O2 + 2 H(+) = corticosterone + 2 oxidized [adrenodoxin] + H2O. The enzyme catalyses corticosterone + 2 reduced [adrenodoxin] + O2 + 2 H(+) = 18-hydroxycorticosterone + 2 oxidized [adrenodoxin] + H2O. The catalysed reaction is 18-hydroxycorticosterone + 2 reduced [adrenodoxin] + O2 + 2 H(+) = aldosterone + 2 oxidized [adrenodoxin] + 2 H2O. It carries out the reaction 11-deoxycortisol + 2 reduced [adrenodoxin] + O2 + 2 H(+) = cortisol + 2 oxidized [adrenodoxin] + H2O. It catalyses the reaction 21-hydroxyprogesterone + 2 reduced [adrenodoxin] + O2 + 2 H(+) = 18-hydroxy-11-deoxycorticosterone + 2 oxidized [adrenodoxin] + H2O. The enzyme catalyses cortisol + 2 reduced [adrenodoxin] + O2 + 2 H(+) = 18-hydroxycortisol + 2 oxidized [adrenodoxin] + H2O. The catalysed reaction is 18-hydroxycortisol + 2 reduced [adrenodoxin] + O2 + 2 H(+) = 18-oxocortisol + 2 oxidized [adrenodoxin] + 2 H2O. Its pathway is steroid biosynthesis. A cytochrome P450 monooxygenase that catalyzes the biosynthesis of aldosterone, the main mineralocorticoid in the human body responsible for salt and water homeostasis, thus involved in blood pressure regulation, arterial hypertension, and the development of heart failure. Catalyzes three sequential oxidative reactions of 11-deoxycorticosterone (21-hydroxyprogesterone), namely 11-beta hydroxylation, followed by two successive oxidations at C18 yielding 18-hydroxy and then 18-oxo intermediates (that would not leave the enzyme active site during the consecutive hydroxylation reactions), ending with the formation of aldosterone. Can also produce 18-hydroxycortisol and 18-oxocortisol, derived from successive oxidations of cortisol at C18, normally found at very low levels, but significantly increased in primary aldosteronism, the most common form of secondary hypertension. Mechanistically, uses molecular oxygen inserting one oxygen atom into a substrate and reducing the second into a water molecule. Two electrons are provided by NADPH via a two-protein mitochondrial transfer system comprising flavoprotein FDXR (adrenodoxin/ferredoxin reductase) and nonheme iron-sulfur protein FDX1 or FDX2 (adrenodoxin/ferredoxin). Could also be involved in the androgen metabolic pathway. In Mus musculus (Mouse), this protein is Cytochrome P450 11B2, mitochondrial (Cyp11b2).